The following is a 201-amino-acid chain: Recombination protein RecR (201 aa).

The segment at 57–72 (CKYCRTFTEQEQCTIC) adopts a C4-type zinc-finger fold. Residues 81-176 (GQICVVESPA…TASRIAHGVP (96 aa)) form the Toprim domain.

It belongs to the RecR family.

In terms of biological role, may play a role in DNA repair. It seems to be involved in an RecBC-independent recombinational process of DNA repair. It may act with RecF and RecO. The sequence is that of Recombination protein RecR from Photorhabdus laumondii subsp. laumondii (strain DSM 15139 / CIP 105565 / TT01) (Photorhabdus luminescens subsp. laumondii).